The sequence spans 308 residues: NAD kinase (308 aa).

Residue Asp86 is the Proton acceptor of the active site. Residues 86-87 (DG), Arg91, 160-161 (NE), Asp190, and 201-206 (TAYAFS) each bind NAD(+).

This sequence belongs to the NAD kinase family. The cofactor is a divalent metal cation.

The protein resides in the cytoplasm. The enzyme catalyses NAD(+) + ATP = ADP + NADP(+) + H(+). Its function is as follows. Involved in the regulation of the intracellular balance of NAD and NADP, and is a key enzyme in the biosynthesis of NADP. Catalyzes specifically the phosphorylation on 2'-hydroxyl of the adenosine moiety of NAD to yield NADP. This is NAD kinase from Mycolicibacterium paratuberculosis (strain ATCC BAA-968 / K-10) (Mycobacterium paratuberculosis).